A 156-amino-acid polypeptide reads, in one-letter code: Transcriptional repressor NrdR (156 aa).

A zinc finger lies at 3–34 (CPFCGNIDTQVKDSRPAEDHVSIRRRRFCPAC). The ATP-cone domain occupies 49–139 (LVVIKTSGKR…VYKNFQAADD (91 aa)).

The protein belongs to the NrdR family. It depends on Zn(2+) as a cofactor.

Its function is as follows. Negatively regulates transcription of bacterial ribonucleotide reductase nrd genes and operons by binding to NrdR-boxes. This is Transcriptional repressor NrdR from Ruegeria pomeroyi (strain ATCC 700808 / DSM 15171 / DSS-3) (Silicibacter pomeroyi).